A 283-amino-acid polypeptide reads, in one-letter code: Hydroxyacylglutathione hydrolase-like protein (283 aa).

Histidine 54, histidine 56, aspartate 58, histidine 59, histidine 110, aspartate 134, and histidine 173 together coordinate Zn(2+).

This sequence belongs to the metallo-beta-lactamase superfamily. Glyoxalase II family. Requires Zn(2+) as cofactor.

In terms of biological role, hydrolase acting on ester bonds. The protein is Hydroxyacylglutathione hydrolase-like protein (Haghl) of Mus musculus (Mouse).